A 178-amino-acid chain; its full sequence is Caveolin-1 (178 aa).

An N-acetylserine modification is found at serine 2. Serine 2 bears the Phosphoserine mark. Residues 2–94 are required for homooligomerization; it reads SGGKYVDSEG…WKASFTTFTV (93 aa). The Cytoplasmic portion of the chain corresponds to 2–104; sequence SGGKYVDSEG…TKYWFYRLLS (103 aa). Lysine 5 carries the post-translational modification N6-acetyllysine; alternate. Residue lysine 5 forms a Glycyl lysine isopeptide (Lys-Gly) (interchain with G-Cter in ubiquitin); alternate linkage. Tyrosine 6 bears the Phosphotyrosine mark. A Phosphoserine modification is found at serine 9. The residue at position 14 (tyrosine 14) is a Phosphotyrosine; by ABL1. Phosphotyrosine is present on tyrosine 25. Residues lysine 26, lysine 30, lysine 39, lysine 47, and lysine 57 each participate in a glycyl lysine isopeptide (Lys-Gly) (interchain with G-Cter in ubiquitin) cross-link. The tract at residues 82 to 94 is interaction with CAVIN3; sequence DGIWKASFTTFTV. Residues 105–125 constitute an intramembrane region (helical); it reads ALFGIPMALIWGIYFAILSFL. Residues 126–178 are Cytoplasmic-facing; the sequence is HIWAVVPCIKSFLIEIQCISRVYSIYVHTFCDPLFEAIGKIFSNVRINLQKEI. Residues 131–142 form an interacts with SPRY1, SPRY2, SPRY3 and SPRY4 region; it reads VPCIKSFLIEIQ. 3 S-palmitoyl cysteine lipidation sites follow: cysteine 133, cysteine 143, and cysteine 156. The interval 149-160 is interacts with SPRY1, SPRY2, and SPRY4; the sequence is SIYVHTFCDPLF. The segment at 167-178 is interacts with SPRY1, SPRY2, SPRY3 and SPRY4; sequence FSNVRINLQKEI.

Belongs to the caveolin family. As to quaternary structure, homooligomer. Interacts with GLIPR2. Interacts with NOSTRIN. Interacts with SNAP25 and STX1A. Interacts (via the N-terminus) with DPP4; the interaction is direct. Interacts with CTNNB1, CDH1 and JUP. Interacts with PACSIN2; this interaction induces membrane tubulation. Interacts with SLC7A9. Interacts with BMX and BTK. Interacts with TGFBR1. Interacts with CAVIN3 (via leucine-zipper domain) in a cholesterol-sensitive manner. Interacts with CAVIN1. Interacts with EHD2 in a cholesterol-dependent manner. Forms a ternary complex with UBXN6 and VCP; mediates CAV1 targeting to lysosomes for degradation. Interacts with ABCG1; this interaction regulates ABCG1-mediated cholesterol efflux. Interacts with NEU3; this interaction enhances NEU3 sialidase activity within caveola. Interacts (via C-terminus) with SPRY1, SPRY2 (via C-terminus), SPRY3, and SPRY4. Interacts with IGFBP5; this interaction allows trafficking of IGFBP5 from the plasma membrane to the nucleus. Phosphorylated at Tyr-14 by ABL1 in response to oxidative stress. In terms of processing, ubiquitinated. Undergo monoubiquitination and multi- and/or polyubiquitination. Monoubiquitination of N-terminal lysines promotes integration in a ternary complex with UBXN6 and VCP which promotes oligomeric CAV1 targeting to lysosomes for degradation. Ubiquitinated by ZNRF1; leading to degradation and modulation of the TLR4-mediated immune response.

The protein resides in the golgi apparatus membrane. It localises to the cell membrane. The protein localises to the membrane. It is found in the caveola. Its subcellular location is the membrane raft. Its function is as follows. May act as a scaffolding protein within caveolar membranes. Forms a stable heterooligomeric complex with CAV2 that targets to lipid rafts and drives caveolae formation. Mediates the recruitment of CAVIN proteins (CAVIN1/2/3/4) to the caveolae. Interacts directly with G-protein alpha subunits and can functionally regulate their activity. Involved in the costimulatory signal essential for T-cell receptor (TCR)-mediated T-cell activation. Its binding to DPP4 induces T-cell proliferation and NF-kappa-B activation in a T-cell receptor/CD3-dependent manner. Recruits CTNNB1 to caveolar membranes and may regulate CTNNB1-mediated signaling through the Wnt pathway. Negatively regulates TGFB1-mediated activation of SMAD2/3 by mediating the internalization of TGFBR1 from membrane rafts leading to its subsequent degradation. Binds 20(S)-hydroxycholesterol (20(S)-OHC). The polypeptide is Caveolin-1 (CAV1) (Equus caballus (Horse)).